Consider the following 507-residue polypeptide: Photosystem II CP47 reaction center protein (507 aa).

At 2-16 the chain is on the cytoplasmic side; the sequence is GLPWYRVHTVVLNDP. Residues 17 to 39 form a helical membrane-spanning segment; sequence GRLISVHLMHTALVAGWAGSMAL. Topologically, residues 40-94 are lumenal, thylakoid; that stretch reads YELAIFDSSDAVLNPMWRQGMFVLPFMARLGVTSSWNGWSVTGETGLDPGFWSFE. Residues 95–116 traverse the membrane as a helical segment; the sequence is GVAAAHIVLSGLLFLAAVWHWV. Residues 117-134 are Cytoplasmic-facing; it reads FWDLELFVDPRTGESALD. Residues 135–159 traverse the membrane as a helical segment; sequence LPKMFGIHLFLSGLLCFGFGAFHLT. Residues 160–196 lie on the Lumenal, thylakoid side of the membrane; sequence GVWGPGMWVSDPYGLTGHVQPVAPEWGPAGFNPFNPG. The helical transmembrane segment at 197-218 threads the bilayer; that stretch reads GVVAHHIAAGIVGIIAGLFHLT. At 219-233 the chain is on the cytoplasmic side; the sequence is VRPPERLYKALRMGN. The chain crosses the membrane as a helical span at residues 234-255; the sequence is IETVLSSSIAAVFFAAFVVAGT. Topologically, residues 256-450 are lumenal, thylakoid; the sequence is MWYGNATTPI…GVFRTSPRGW (195 aa). A helical membrane pass occupies residues 451–474; it reads FTFGHAVFALLFFFGHIWHGSRTL. Over 475–507 the chain is Cytoplasmic; it reads FRDVFAGVDPGLEEQVEFGVFAKVGDLSTRKEA.

The protein belongs to the PsbB/PsbC family. PsbB subfamily. As to quaternary structure, PSII is composed of 1 copy each of membrane proteins PsbA, PsbB, PsbC, PsbD, PsbE, PsbF, PsbH, PsbI, PsbJ, PsbK, PsbL, PsbM, PsbT, PsbX, Psb30/Ycf12, peripheral proteins PsbO, CyanoQ (PsbQ), PsbU, PsbV and a large number of cofactors. It forms dimeric complexes. Contacts PsbQ. Requires Binds multiple chlorophylls. PSII binds additional chlorophylls, carotenoids and specific lipids. as cofactor.

The protein localises to the cellular thylakoid membrane. Functionally, one of the components of the core complex of photosystem II (PSII). It binds chlorophyll and helps catalyze the primary light-induced photochemical processes of PSII. PSII is a light-driven water:plastoquinone oxidoreductase, using light energy to abstract electrons from H(2)O, generating O(2) and a proton gradient subsequently used for ATP formation. The chain is Photosystem II CP47 reaction center protein from Synechocystis sp. (strain ATCC 27184 / PCC 6803 / Kazusa).